Here is a 380-residue protein sequence, read N- to C-terminus: Asporin (380 aa).

Positions 1–14 are cleaved as a signal peptide; that stretch reads MKEYVLLLFLALCS. Residues 15 to 32 constitute a propeptide that is removed on maturation; that stretch reads AKPFFSPSHIALKNMMLK. Acidic residues predominate over residues 35–54; sequence EDTDDDDDDDDDDDDDDEDN. The disordered stretch occupies residues 35–59; that stretch reads EDTDDDDDDDDDDDDDDEDNSLFPT. O-linked (GalNAc...) serine glycosylation occurs at Ser-55. In terms of domain architecture, LRRNT spans 66–102; the sequence is FFPFDLFPMCPFGCQCYSRVVHCSDLGLTSVPTNIPF. 2 disulfides stabilise this stretch: Cys-75/Cys-81 and Cys-79/Cys-88. LRR repeat units follow at residues 103–124, 127–148, 151–173, 174–193, 196–219, 242–263, 266–287, 290–312, 313–334, 335–357, and 358–380; these read DTRMLDLQNNKIKEIKENDFKG, SLYGLILNNNKLTKIHPKAFLT, KLRRLYLSHNQLSEIPLNLPKSL, AELRIHENKVKKIQKDTFKG, ALHVLEMSANPLDNNGIEPGAFEG, TLLELHLDYNKISTVELEDFKR, ELQRLGLGNNKITDIENGSLAN, RVREIHLENNKLKKIPSGLPELK, YLQIIFLHSNSIARVGVNDFCP, TVPKMKKSLYSAISLFNNPVKYW, and EMQPATFRCVLSRMSVQLGNFGM. An interaction with TGFB1 region spans residues 166 to 212; it reads PLNLPKSLAELRIHENKVKKIQKDTFKGMNALHVLEMSANPLDNNGI. Asn-282 carries an N-linked (GlcNAc...) asparagine glycan. An intrachain disulfide couples Cys-333 to Cys-366.

This sequence belongs to the small leucine-rich proteoglycan (SLRP) family. SLRP class I subfamily. Interacts with TGFB1, TGFB2 and TGFB3. DCN, BGN, and FMOD inhibit binding to TGFB1. Interacts with BMP2. Interacts in vitro with type II collagen. Interacts with type I collagen. DCN can inhibit collagen binding. In terms of processing, there is no serine/glycine dipeptide sequence expected for the attachment of O-linked glycosaminoglycans and this is probably not a proteoglycan. The O-linked polysaccharide on 54-Ser is probably the mucin type linked to GalNAc. The N-linked glycan at Asn-282 is composed of variable structures of GlcNAc, mannose, fucose, HexNAc and hexose. Higher levels in osteoarthritic articular cartilage, aorta, uterus. Moderate expression in small intestine, heart, liver, bladder, ovary, stomach, and in the adrenal, thyroid, and mammary glands. Low expression in trachea, bone marrow, and lung. Colocalizes with TGFB1 in chondrocytes within osteoarthritic (OA) lesions of articular cartilage.

The protein resides in the secreted. It is found in the extracellular space. The protein localises to the extracellular matrix. Negatively regulates periodontal ligament (PDL) differentiation and mineralization to ensure that the PDL is not ossified and to maintain homeostasis of the tooth-supporting system. Inhibits BMP2-induced cytodifferentiation of PDL cells by preventing its binding to BMPR1B/BMP type-1B receptor, resulting in inhibition of BMP-dependent activation of SMAD proteins. Critical regulator of TGF-beta in articular cartilage and plays an essential role in cartilage homeostasis and osteoarthritis (OA) pathogenesis. Negatively regulates chondrogenesis in the articular cartilage by blocking the TGF-beta/receptor interaction on the cell surface and inhibiting the canonical TGF-beta/Smad signal. Binds calcium and plays a role in osteoblast-driven collagen biomineralization activity. This is Asporin (ASPN) from Homo sapiens (Human).